The chain runs to 1065 residues: MGEIEGTYRALPTSGTRLGGQTAIGVSTLEPEQSLSPRMQEKHMRIRVKLLDSTVELFDIEPKCDGQVLLTQVWKHLNLIECDYFGLEFKNVQSYWIWLEPMKPIIRQVRKPKNAVLRLAVKFFPPDPGQLQEEYTRYLFALQLKRDLLEERLTCTANTAALLISHLLQSEIGDYDETLDREHLKANEYLPNQEKSLEKILDFHQRHTGQTPAESDFQVLEIARKLEMYGIRFHMASDREGTKINLAVSHMGVLVFQGTTKINTFNWSKVRKLSFKRKRFLIKLHPEVHGPYQDTLEFLLGSRDECKNFWKICVEYHTFFRLSDQPKPKAKAVFFSRGSSFRYSGRTQKQLVDYVKDGGMKRIPYERRHSKTRTSLHALTVDLPKQSVSFTDGLRTSASLSSANVSFYPPPSSSLSPPGLPNLKDSSSSLVDPQAPVIKSTAAERSSGPSSSDGPSTQSAHLPGPPVLRPGPGFSMDSPQPSPSSLKSHLSLCPELQAALSTAEQGASPVLSPVLSGAGTARMDNQEEQKHKHMPEDEAYFIAKEILATERTYLKDLEVITVWFRSVLIKEEAMPAALMALLFSNIDPVYEFHRGFLHEVEQRLALWEGPSSAHLKGDHQRIGDILLRNMRQLKEFTSYFQRHDEVLTELEKATKHCKKLEAVYKEFELQKVCYLPLNTFLLKPVQRLVHYRLLLSRLCAHYSPGHRDYADCHEALKAITEVTTELQQSLTRLENLQKLTELQRDLVGVENLIAPGREFIREGCLHKLTKKGLQQRMFFLFSDMLLYTSKSVTGASHFRIRGFLPLRGMLVEESENEWSVPHCFTIYAAQKTIVVAASTRLEKEKWMQDLNAAIQAAKTIGDSPPVLLGGPVYTRTPRSSDEVSLEESEDGRGNRGSLEGNSQHRANTTMHVCWYRNTSVSRADHSAAVENQLSGYLLRKFKNSNGWQKLWVVFTNFCLFFYKTHQDDYPLASLPLLGYSVSLPREADSIHKDYVFKLQFKSHVYFFRAESKYTFERWMDVIKRASSSPGRPPSFTQDCSHHSPGLEAEIREKEACPSPCLDKNL.

One can recognise an FERM domain in the interval 44-324 (MRIRVKLLDS…EYHTFFRLSD (281 aa)). Phosphoserine is present on residues Ser389 and Ser440. Disordered regions lie at residues 406 to 489 (SFYP…LKSH) and 504 to 534 (EQGA…HKHM). The span at 440–459 (STAAERSSGPSSSDGPSTQS) shows a compositional bias: low complexity. Basic and acidic residues predominate over residues 524 to 534 (DNQEEQKHKHM). The DH domain maps to 538–729 (EAYFIAKEIL…TEVTTELQQS (192 aa)). A PH 1 domain is found at 758-855 (EFIREGCLHK…WMQDLNAAIQ (98 aa)). Residues Ser863 and Ser880 each carry the phosphoserine modification. The tract at residues 874 to 902 (TRTPRSSDEVSLEESEDGRGNRGSLEGNS) is disordered. Residues 930–1027 (ENQLSGYLLR…WMDVIKRASS (98 aa)) form the PH 2 domain.

In terms of assembly, interacts with PLXNA1. Interaction with PLXNA1 or PIP5K1C lowers its guanine nucleotide exchange activity. Dissociates from PLXNA1 when SEMA3A binds to the receptor. Interacts with PIP5K1C via its FERM domain. The interaction with PIP5K1C is enhanced by SEMA3A binding. Interacts with RAC1. In terms of tissue distribution, detected in adult brain, lung and testis. Detected in embryonic hippocampus and brain cortex.

Functionally, functions as a guanine nucleotide exchange factor that activates RAC1. May have relatively low activity. Plays a role in the response to class 3 semaphorins and remodeling of the actin cytoskeleton. Plays a role in TNFSF11-mediated osteoclast differentiation, especially in podosome rearrangement and reorganization of the actin cytoskeleton. Regulates the activation of ITGB3, integrin signaling and cell adhesion. In Mus musculus (Mouse), this protein is FERM, ARHGEF and pleckstrin domain-containing protein 2 (Farp2).